The sequence spans 283 residues: Putative cytochrome b-c1 complex subunit Rieske-like protein 1 (283 aa).

The helical transmembrane segment at 116-149 (TEARKGFSYLVTGVTTVGVAYAAKNAVTQFVSSM) threads the bilayer. Residues 196-281 (EAAVELSQLR…YEFTSDDMVI (86 aa)) form the Rieske domain. Residues cysteine 226, histidine 228, cysteine 245, and histidine 248 each contribute to the [2Fe-2S] cluster site. Cysteine 231 and cysteine 247 form a disulfide bridge.

Belongs to the Rieske iron-sulfur protein family. The cofactor is [2Fe-2S] cluster.

Its subcellular location is the membrane. The chain is Putative cytochrome b-c1 complex subunit Rieske-like protein 1 (UQCRFS1P1) from Homo sapiens (Human).